The sequence spans 720 residues: Proline-rich receptor-like protein kinase PERK12 (720 aa).

Residues 1–240 form a disordered region; the sequence is MSDLGESPSS…GNGDGGGGGG (240 aa). The Extracellular portion of the chain corresponds to 1–246; sequence MSDLGESPSS…GGGGGYQGKT (246 aa). Over residues 10-25 the composition is skewed to pro residues; the sequence is SSPPAPPADTAPPPET. The span at 26–35 shows a compositional bias: low complexity; that stretch reads PSENSALPPV. Composition is skewed to pro residues over residues 52 to 84 and 92 to 116; these read LSEPSTPPPDSQLPPLPSILPPLTDSPPPPSDS and PSPPPPTSNESPSPPEDSETPPAPP. N-linked (GlcNAc...) asparagine glycosylation is present at N117. Composition is skewed to pro residues over residues 123–138 and 147–207; these read NPPPSQDLQSPPPSSP and PESP…PPKT. The helical transmembrane segment at 247–267 threads the bilayer; sequence MVGMAVAGFAIMALIGVVFLV. Residues 268–720 are Cytoplasmic-facing; that stretch reads RRKKKRNIDS…ETRPFNNRRF (453 aa). A disordered region spans residues 300 to 349; sequence QDPGKGYSSGPNGSMYNNSQQQQSSMGNSYGTAGGGYPHHQMQSSGTPDS. Residues 311–330 are compositionally biased toward low complexity; that stretch reads NGSMYNNSQQQQSSMGNSYG. Residues 371–624 enclose the Protein kinase domain; it reads FARKNILGEG…EVFRMIETAA (254 aa). Residues 377–385 and K399 each bind ATP; that span reads LGEGGFGCV. A Phosphotyrosine modification is found at Y444. D495 functions as the Proton acceptor in the catalytic mechanism. S528 is modified (phosphoserine). Residues T529 and T534 each carry the phosphothreonine modification. At Y542 the chain carries Phosphotyrosine. Residues 698–720 form a disordered region; sequence SAKSSSDFSGNESETRPFNNRRF.

It belongs to the protein kinase superfamily. Ser/Thr protein kinase family. In terms of tissue distribution, mostly expressed in apical parts, including flower buds, and particularly in anthers. Also present in root hairs.

The protein localises to the cell membrane. It catalyses the reaction L-seryl-[protein] + ATP = O-phospho-L-seryl-[protein] + ADP + H(+). It carries out the reaction L-threonyl-[protein] + ATP = O-phospho-L-threonyl-[protein] + ADP + H(+). Functionally, regulates the auxin-related MAX (More Axillary Growth) pathway during the shoot branching. This Arabidopsis thaliana (Mouse-ear cress) protein is Proline-rich receptor-like protein kinase PERK12 (PERK12).